The sequence spans 289 residues: Cell division protein ZipA (289 aa).

Residue methionine 1 is a topological domain, periplasmic. Residues 2–22 (DIGLREWLIVIGLIVIAGILF) form a helical membrane-spanning segment. The Cytoplasmic segment spans residues 23-289 (DGWRRMRGGK…HERRSLMQKR (267 aa)). Residues 65-141 (HREPSFDEQD…KEREKAPAVA (77 aa)) form a disordered region. A compositionally biased stretch (basic and acidic residues) spans 81–99 (RETKERKGGKRQEEPRQGD). A compositionally biased stretch (acidic residues) spans 100 to 114 (LDLDEGLALEADPSD).

Belongs to the ZipA family. As to quaternary structure, interacts with FtsZ via their C-terminal domains.

Its subcellular location is the cell inner membrane. Essential cell division protein that stabilizes the FtsZ protofilaments by cross-linking them and that serves as a cytoplasmic membrane anchor for the Z ring. Also required for the recruitment to the septal ring of downstream cell division proteins. This chain is Cell division protein ZipA, found in Pseudomonas aeruginosa (strain UCBPP-PA14).